The chain runs to 564 residues: Dihydroxy-acid dehydratase (564 aa).

Residue Cys-53 participates in [2Fe-2S] cluster binding. Asp-85 contributes to the Mg(2+) binding site. Cys-126 serves as a coordination point for [2Fe-2S] cluster. The Mg(2+) site is built by Asp-127 and Lys-128. Lys-128 is subject to N6-carboxylysine. A [2Fe-2S] cluster-binding site is contributed by Cys-203. Glu-454 contacts Mg(2+). Catalysis depends on Ser-480, which acts as the Proton acceptor.

This sequence belongs to the IlvD/Edd family. As to quaternary structure, homodimer. [2Fe-2S] cluster is required as a cofactor. Requires Mg(2+) as cofactor.

It carries out the reaction (2R)-2,3-dihydroxy-3-methylbutanoate = 3-methyl-2-oxobutanoate + H2O. The catalysed reaction is (2R,3R)-2,3-dihydroxy-3-methylpentanoate = (S)-3-methyl-2-oxopentanoate + H2O. Its pathway is amino-acid biosynthesis; L-isoleucine biosynthesis; L-isoleucine from 2-oxobutanoate: step 3/4. The protein operates within amino-acid biosynthesis; L-valine biosynthesis; L-valine from pyruvate: step 3/4. In terms of biological role, functions in the biosynthesis of branched-chain amino acids. Catalyzes the dehydration of (2R,3R)-2,3-dihydroxy-3-methylpentanoate (2,3-dihydroxy-3-methylvalerate) into 2-oxo-3-methylpentanoate (2-oxo-3-methylvalerate) and of (2R)-2,3-dihydroxy-3-methylbutanoate (2,3-dihydroxyisovalerate) into 2-oxo-3-methylbutanoate (2-oxoisovalerate), the penultimate precursor to L-isoleucine and L-valine, respectively. The polypeptide is Dihydroxy-acid dehydratase (Clavibacter michiganensis subsp. michiganensis (strain NCPPB 382)).